The primary structure comprises 142 residues: Ribosome maturation factor RimP (142 aa).

The protein belongs to the RimP family.

It is found in the cytoplasm. Functionally, required for maturation of 30S ribosomal subunits. The polypeptide is Ribosome maturation factor RimP (Sulfurovum sp. (strain NBC37-1)).